The following is a 278-amino-acid chain: ATP synthase subunit a (278 aa).

Transmembrane regions (helical) follow at residues 43 to 63 (TWHI…LWIF), 104 to 124 (IAPL…MDMI), 148 to 168 (DVNI…FYSI), 191 to 211 (IPVN…SLAL), 222 to 242 (LIFI…TLGV), and 249 to 269 (LIFH…LTIV).

This sequence belongs to the ATPase A chain family. F-type ATPases have 2 components, CF(1) - the catalytic core - and CF(0) - the membrane proton channel. CF(1) has five subunits: alpha(3), beta(3), gamma(1), delta(1), epsilon(1). CF(0) has three main subunits: a(1), b(2) and c(9-12). The alpha and beta chains form an alternating ring which encloses part of the gamma chain. CF(1) is attached to CF(0) by a central stalk formed by the gamma and epsilon chains, while a peripheral stalk is formed by the delta and b chains.

Its subcellular location is the cell inner membrane. Its function is as follows. Key component of the proton channel; it plays a direct role in the translocation of protons across the membrane. This Shewanella baltica (strain OS185) protein is ATP synthase subunit a.